A 611-amino-acid polypeptide reads, in one-letter code: Putative type II restriction enzyme HgiDII (611 aa).

A compositionally biased stretch (basic and acidic residues) spans 355 to 364 (YPSNPKKEEV). Residues 355–434 (YPSNPKKEEV…PEPSPPPKQE (80 aa)) are disordered. Residues 381 to 409 (TNASSDSSTATENASSDSSTATENASSET) are compositionally biased toward low complexity. 2 tandem repeats follow at residues 382 to 392 (NASSDSSTATE) and 393 to 403 (NASSDSSTATE). The interval 382–403 (NASSDSSTATENASSDSSTATE) is 2.5 X 11 AA tandem repeats. A 3; truncated repeat occupies 404–409 (NASSET). Positions 410 to 425 (NDGEVEDNSFFDDDIP) are enriched in acidic residues.

It carries out the reaction Endonucleolytic cleavage of DNA to give specific double-stranded fragments with terminal 5'-phosphates.. Functionally, according to REBASE this is a P subtype restriction enzyme that recognizes the double-stranded sequence 5'-GTCGAC-3' and cleaves after G-1. No restriction activity was detected upon overexpressing this protein in E.coli. This is Putative type II restriction enzyme HgiDII from Herpetosiphon aurantiacus (Herpetosiphon giganteus).